Consider the following 534-residue polypeptide: C-22 sterol desaturase ERG5B (534 aa).

A helical transmembrane segment spans residues 43–61 (IAVTIFAVLIAYDQFMYIW). Cys-480 lines the heme pocket.

It belongs to the cytochrome P450 family. Heme is required as a cofactor.

The protein resides in the endoplasmic reticulum membrane. The enzyme catalyses 5-dehydroepisterol + NADPH + O2 + H(+) = ergosta-5,7,22,24(28)-tetraen-3beta-ol + NADP(+) + 2 H2O. It functions in the pathway steroid metabolism; ergosterol biosynthesis. C-22 sterol desaturase; part of the third module of ergosterol biosynthesis pathway that includes the late steps of the pathway. ERG5A and ERG5B convert 5-dehydroepisterol into ergosta-5,7,22,24(28)-tetraen-3beta-ol by forming the C-22(23) double bond in the sterol side chain. The third module or late pathway involves the ergosterol synthesis itself through consecutive reactions that mainly occur in the endoplasmic reticulum (ER) membrane. Firstly, the squalene synthase ERG9 catalyzes the condensation of 2 farnesyl pyrophosphate moieties to form squalene, which is the precursor of all steroids. Squalene synthase is crucial for balancing the incorporation of farnesyl diphosphate (FPP) into sterol and nonsterol isoprene synthesis. Secondly, squalene is converted into lanosterol by the consecutive action of the squalene epoxidase ERG1 and the lanosterol synthase ERG7. Then, the delta(24)-sterol C-methyltransferase ERG6 methylates lanosterol at C-24 to produce eburicol. Eburicol is the substrate of the sterol 14-alpha demethylase encoded by CYP51A, CYP51B and CYP51C, to yield 4,4,24-trimethyl ergosta-8,14,24(28)-trienol. CYP51B encodes the enzyme primarily responsible for sterol 14-alpha-demethylation, and plays an essential role in ascospore formation. CYP51A encodes an additional sterol 14-alpha-demethylase, induced on ergosterol depletion and responsible for the intrinsic variation in azole sensitivity. The third CYP51 isoform, CYP51C, does not encode a sterol 14-alpha-demethylase, but is required for full virulence on host wheat ears. The C-14 reductase ERG24 then reduces the C14=C15 double bond which leads to 4,4-dimethylfecosterol. A sequence of further demethylations at C-4, involving the C-4 demethylation complex containing the C-4 methylsterol oxidases ERG25, the sterol-4-alpha-carboxylate 3-dehydrogenase ERG26 and the 3-keto-steroid reductase ERG27, leads to the production of fecosterol via 4-methylfecosterol. ERG28 has a role as a scaffold to help anchor ERG25, ERG26 and ERG27 to the endoplasmic reticulum. The C-8 sterol isomerase ERG2 then catalyzes the reaction which results in unsaturation at C-7 in the B ring of sterols and thus converts fecosterol to episterol. The sterol-C5-desaturases ERG3A and ERG3BB then catalyze the introduction of a C-5 double bond in the B ring to produce 5-dehydroepisterol. The C-22 sterol desaturases ERG5A and ERG5B further convert 5-dehydroepisterol into ergosta-5,7,22,24(28)-tetraen-3beta-ol by forming the C-22(23) double bond in the sterol side chain. Finally, ergosta-5,7,22,24(28)-tetraen-3beta-ol is substrate of the C-24(28) sterol reductase ERG4 to produce ergosterol. The protein is C-22 sterol desaturase ERG5B of Gibberella zeae (strain ATCC MYA-4620 / CBS 123657 / FGSC 9075 / NRRL 31084 / PH-1) (Wheat head blight fungus).